The chain runs to 225 residues: Uracil-DNA glycosylase (225 aa).

D65 serves as the catalytic Proton acceptor.

The protein belongs to the uracil-DNA glycosylase (UDG) superfamily. UNG family.

Its subcellular location is the cytoplasm. It carries out the reaction Hydrolyzes single-stranded DNA or mismatched double-stranded DNA and polynucleotides, releasing free uracil.. Functionally, excises uracil residues from the DNA which can arise as a result of misincorporation of dUMP residues by DNA polymerase or due to deamination of cytosine. This Clostridium perfringens (strain 13 / Type A) protein is Uracil-DNA glycosylase.